We begin with the raw amino-acid sequence, 128 residues long: Large ribosomal subunit protein bL19 (128 aa).

The protein belongs to the bacterial ribosomal protein bL19 family.

In terms of biological role, this protein is located at the 30S-50S ribosomal subunit interface and may play a role in the structure and function of the aminoacyl-tRNA binding site. The chain is Large ribosomal subunit protein bL19 from Janthinobacterium sp. (strain Marseille) (Minibacterium massiliensis).